Reading from the N-terminus, the 530-residue chain is Bifunctional purine biosynthesis protein PurH (530 aa).

Positions 1 to 148 (MNNARPIHRA…KNHKDVAIVV (148 aa)) constitute an MGS-like domain.

It belongs to the PurH family.

The catalysed reaction is (6R)-10-formyltetrahydrofolate + 5-amino-1-(5-phospho-beta-D-ribosyl)imidazole-4-carboxamide = 5-formamido-1-(5-phospho-D-ribosyl)imidazole-4-carboxamide + (6S)-5,6,7,8-tetrahydrofolate. The enzyme catalyses IMP + H2O = 5-formamido-1-(5-phospho-D-ribosyl)imidazole-4-carboxamide. It participates in purine metabolism; IMP biosynthesis via de novo pathway; 5-formamido-1-(5-phospho-D-ribosyl)imidazole-4-carboxamide from 5-amino-1-(5-phospho-D-ribosyl)imidazole-4-carboxamide (10-formyl THF route): step 1/1. Its pathway is purine metabolism; IMP biosynthesis via de novo pathway; IMP from 5-formamido-1-(5-phospho-D-ribosyl)imidazole-4-carboxamide: step 1/1. This chain is Bifunctional purine biosynthesis protein PurH, found in Vibrio cholerae serotype O1 (strain ATCC 39541 / Classical Ogawa 395 / O395).